Reading from the N-terminus, the 610-residue chain is UvrABC system protein C (610 aa).

Positions 16-94 (NQPGVYRMYN…IKQYLPKYNV (79 aa)) constitute a GIY-YIG domain. The region spanning 204 to 239 (NQVLSILVEKMEQASRELRFEDAAKARDQIQAIRRV) is the UVR domain.

The protein belongs to the UvrC family. In terms of assembly, interacts with UvrB in an incision complex.

The protein localises to the cytoplasm. The UvrABC repair system catalyzes the recognition and processing of DNA lesions. UvrC both incises the 5' and 3' sides of the lesion. The N-terminal half is responsible for the 3' incision and the C-terminal half is responsible for the 5' incision. The chain is UvrABC system protein C from Vibrio cholerae serotype O1 (strain ATCC 39315 / El Tor Inaba N16961).